Consider the following 215-residue polypeptide: Adenylate kinase (215 aa).

G10–T15 provides a ligand contact to ATP. The segment at S30–V59 is NMP. AMP contacts are provided by residues T31, R36, K57 to V59, G85 to R88, and Q92. The interval G122–D159 is LID. Residues R123 and T132 to Y133 each bind ATP. Positions 156 and 167 each coordinate AMP. K200 is an ATP binding site.

This sequence belongs to the adenylate kinase family. As to quaternary structure, monomer.

It is found in the cytoplasm. The catalysed reaction is AMP + ATP = 2 ADP. It participates in purine metabolism; AMP biosynthesis via salvage pathway; AMP from ADP: step 1/1. Its function is as follows. Catalyzes the reversible transfer of the terminal phosphate group between ATP and AMP. Plays an important role in cellular energy homeostasis and in adenine nucleotide metabolism. The polypeptide is Adenylate kinase (Haemophilus ducreyi (strain 35000HP / ATCC 700724)).